We begin with the raw amino-acid sequence, 681 residues long: Proline-rich receptor-like protein kinase PERK8 (681 aa).

Residues 1-11 (MSLVPPLPILS) are compositionally biased toward pro residues. The segment at 1-231 (MSLVPPLPIL…TLPSSSPGKS (231 aa)) is disordered. Topologically, residues 1–237 (MSLVPPLPIL…PGKSEVGTGG (237 aa)) are extracellular. An N-linked (GlcNAc...) asparagine glycan is attached at Asn16. Pro residues predominate over residues 21 to 163 (APPPLQTQPT…SPPKPSPSTP (143 aa)). The segment covering 177–191 (TSASPPSSNPTDPST) has biased composition (low complexity). Pro residues predominate over residues 192–201 (LAPPPTPLPV). The span at 214 to 229 (PASNNGNNTLPSSSPG) shows a compositional bias: polar residues. N-linked (GlcNAc...) asparagine glycosylation is present at Asn220. A helical transmembrane segment spans residues 238-258 (IVAIGVIVGLVFLSLFVMGVW). Topologically, residues 259 to 681 (FTRKRKRKDP…GSRDQSRFVP (423 aa)) are cytoplasmic. In terms of domain architecture, Protein kinase spans 339–617 (FSEKNLLGEG…SQVVRALDTL (279 aa)). ATP-binding positions include 345–353 (LGEGGFGCV) and Lys367. Tyr412 carries the post-translational modification Phosphotyrosine. Asp463 functions as the Proton acceptor in the catalytic mechanism. Phosphoserine is present on residues Ser467 and Ser498. Phosphothreonine occurs at positions 499 and 504. At Tyr512 the chain carries Phosphotyrosine.

The protein belongs to the protein kinase superfamily. Ser/Thr protein kinase family. In terms of assembly, interacts with KIPK1 and KIPK2 (via its cytosolic domain). Mostly expressed in seedlings, roots, inflorescence bolts and flower buds.

Its subcellular location is the cell membrane. It carries out the reaction L-seryl-[protein] + ATP = O-phospho-L-seryl-[protein] + ADP + H(+). The catalysed reaction is L-threonyl-[protein] + ATP = O-phospho-L-threonyl-[protein] + ADP + H(+). Could be involved in the negative regulation of root growth. This chain is Proline-rich receptor-like protein kinase PERK8 (PERK8), found in Arabidopsis thaliana (Mouse-ear cress).